The sequence spans 202 residues: Small ribosomal subunit protein uS5 (202 aa).

In terms of domain architecture, S5 DRBM spans 46 to 109 (LKSEVLSVGF…RRAKLNIVPV (64 aa)).

Belongs to the universal ribosomal protein uS5 family. In terms of assembly, part of the 30S ribosomal subunit. Contacts protein S4.

In terms of biological role, with S4 and S12 plays an important role in translational accuracy. This chain is Small ribosomal subunit protein uS5, found in Thermofilum pendens (strain DSM 2475 / Hrk 5).